Here is a 184-residue protein sequence, read N- to C-terminus: MNVKGTPTRTIWPAREGGAVWIIDQTRLPHEFVTQRLNDLGAVAHAIRAMLVRGAPLIGATAAYGVALGMAEDPSDEGLTRACQTLLATRPTAVNLRWAIEAMAESLAAVPPDQRAQAAWAKAGAICDEDVALNEAIGDHGLGIIKDLARTKGVEKGGEGPINILTHCNAGWLATVDWARPWRR.

Belongs to the eIF-2B alpha/beta/delta subunits family.

This is an uncharacterized protein from Rhodospirillum rubrum.